The chain runs to 189 residues: Dihydrofolate reductase (189 aa).

In terms of domain architecture, DHFR spans 3–184 (SLNSIVAVCQ…IQYKFEVYQK (182 aa)). Residues Ala9 and 15–21 (GIGKDGN) contribute to the NADP(+) site. Substrate is bound at residue 30–35 (EYKYFQ). Position 54–56 (54–56 (KKT)) interacts with NADP(+). Substrate is bound by residues Asn64 and Arg70. Residues 76–78 (SRE) and 116–123 (GGTAVYKA) each bind NADP(+).

This sequence belongs to the dihydrofolate reductase family.

The catalysed reaction is (6S)-5,6,7,8-tetrahydrofolate + NADP(+) = 7,8-dihydrofolate + NADPH + H(+). It participates in cofactor biosynthesis; tetrahydrofolate biosynthesis; 5,6,7,8-tetrahydrofolate from 7,8-dihydrofolate: step 1/1. Its function is as follows. Key enzyme in folate metabolism. Contributes to the de novo mitochondrial thymidylate biosynthesis pathway. Catalyzes an essential reaction for de novo glycine and purine synthesis, and for DNA precursor synthesis. May bind to mRNA. The protein is Dihydrofolate reductase (DHFR) of Gallus gallus (Chicken).